The chain runs to 451 residues: Zinc metalloproteinase nas-16 (451 aa).

The Peptidase M12A domain occupies 70–273 (QVVTKLFSPQ…LTINTAYNCK (204 aa)). Cystine bridges form between C127–C272, C148–C167, C274–C291, and C296–C305. The N-linked (GlcNAc...) asparagine glycan is linked to N133. H175 is a Zn(2+) binding site. E176 is a catalytic residue. H179 and H185 together coordinate Zn(2+). Positions 267 to 306 (NTAYNCKCPSELLCANGGYTNPSNCLECICPLGYGGVLCD) constitute an EGF-like domain. 2 N-linked (GlcNAc...) asparagine glycosylation sites follow: N363 and N438.

Zn(2+) serves as cofactor.

It is found in the secreted. Functionally, metalloprotease. The chain is Zinc metalloproteinase nas-16 (nas-16) from Caenorhabditis elegans.